A 331-amino-acid polypeptide reads, in one-letter code: C4-dicarboxylate-binding periplasmic protein DctP (331 aa).

An N-terminal signal peptide occupies residues 1–23; it reads MLKHTAKALVCALSLTVAGIVQA.

Belongs to the bacterial solute-binding protein 7 family. As to quaternary structure, the complex comprises the extracytoplasmic solute receptor protein DctP, and the two transmembrane proteins DctQ and DctM.

Its subcellular location is the periplasm. In terms of biological role, part of the tripartite ATP-independent periplasmic (TRAP) transport system DctPQM involved in C4-dicarboxylates uptake. The chain is C4-dicarboxylate-binding periplasmic protein DctP from Pseudomonas aeruginosa (strain ATCC 15692 / DSM 22644 / CIP 104116 / JCM 14847 / LMG 12228 / 1C / PRS 101 / PAO1).